Reading from the N-terminus, the 692-residue chain is Elongation factor G (692 aa).

Positions 8 to 282 constitute a tr-type G domain; that stretch reads EKTRNIGIMA…AVVEYMPAPT (275 aa). GTP is bound by residues 17-24, 81-85, and 135-138; these read AHIDAGKT, DTPGH, and NKMD. Residues 285-304 are disordered; it reads PNIKGVHPETGEADERHSSD. Over residues 290 to 304 the composition is skewed to basic and acidic residues; that stretch reads VHPETGEADERHSSD.

This sequence belongs to the TRAFAC class translation factor GTPase superfamily. Classic translation factor GTPase family. EF-G/EF-2 subfamily.

Its subcellular location is the cytoplasm. Catalyzes the GTP-dependent ribosomal translocation step during translation elongation. During this step, the ribosome changes from the pre-translocational (PRE) to the post-translocational (POST) state as the newly formed A-site-bound peptidyl-tRNA and P-site-bound deacylated tRNA move to the P and E sites, respectively. Catalyzes the coordinated movement of the two tRNA molecules, the mRNA and conformational changes in the ribosome. The polypeptide is Elongation factor G (Desulfitobacterium hafniense (strain Y51)).